Reading from the N-terminus, the 450-residue chain is Phosphoglucosamine mutase (450 aa).

Catalysis depends on Ser101, which acts as the Phosphoserine intermediate. Mg(2+)-binding residues include Ser101, Asp241, Asp243, and Asp245. A Phosphoserine modification is found at Ser101.

It belongs to the phosphohexose mutase family. Requires Mg(2+) as cofactor. Post-translationally, activated by phosphorylation.

It carries out the reaction alpha-D-glucosamine 1-phosphate = D-glucosamine 6-phosphate. Catalyzes the conversion of glucosamine-6-phosphate to glucosamine-1-phosphate. This Listeria innocua serovar 6a (strain ATCC BAA-680 / CLIP 11262) protein is Phosphoglucosamine mutase.